Here is a 119-residue protein sequence, read N- to C-terminus: Large ribosomal subunit protein bL20 (119 aa).

This sequence belongs to the bacterial ribosomal protein bL20 family.

In terms of biological role, binds directly to 23S ribosomal RNA and is necessary for the in vitro assembly process of the 50S ribosomal subunit. It is not involved in the protein synthesizing functions of that subunit. The polypeptide is Large ribosomal subunit protein bL20 (Burkholderia ambifaria (strain MC40-6)).